We begin with the raw amino-acid sequence, 426 residues long: PHD finger-containing protein 6 (426 aa).

The PHD-type zinc finger occupies 9 to 59 (RSICETCGHQGWKNSLVTCSKCRIACEHCYCMRESSFETSIHFVCADCSMR). Residues cysteine 12, cysteine 15, cysteine 27, cysteine 30, histidine 36, cysteine 39, cysteine 53, and cysteine 56 each contribute to the Zn(2+) site. Disordered regions lie at residues 122–144 (TFRV…TAGF) and 185–205 (RQAS…GDGA).

Interacts directly with AIPP3/BDT1.

Its function is as follows. Together with AIPP3/BDT1, cooperates to form a BAH-PHD bivalent histone reader complex able to read histone H3 lysine 27 trimethylation (H3K27me3) histone marks in order to regulate transcription, especially to prevent early flowering; promotes AIPP3/BDT1 binding to H3K27me3. This is PHD finger-containing protein 6 from Arabidopsis thaliana (Mouse-ear cress).